The following is a 223-amino-acid chain: Cytolethal distending toxin subunit A (223 aa).

The N-terminal stretch at 1–15 is a signal peptide; that stretch reads MKKFLPSLLLMGSVA. A lipid anchor (N-palmitoyl cysteine) is attached at Cys-16. The S-diacylglycerol cysteine moiety is linked to residue Cys-16. The segment at 20–48 is disordered; it reads QRMNDYSQPESQSDLAPKSSTIQPQPQPL. Residues 91–102 are mediates binding to target cells; it reads WALAKRNWLWAY. The Ricin B-type lectin domain maps to 123-212; it reads HREYFRFVNQ…EPSRDQTWYL (90 aa).

In terms of assembly, heterotrimer of 3 subunits, CdtA, CdtB and CdtC.

It is found in the cell outer membrane. In terms of biological role, CDTs are cytotoxins which induce host cell distension, growth arrest in G2/M phase, nucleus swelling, and chromatin fragmentation in HeLa cells. CdtA, along with CdtC, probably forms a heterodimeric subunit required for the delivery of CdtB. The sequence is that of Cytolethal distending toxin subunit A (cdtA) from Haemophilus ducreyi (strain 35000HP / ATCC 700724).